A 1411-amino-acid polypeptide reads, in one-letter code: Protein RhsB (1411 aa).

A run of 28 repeats spans residues 330 to 352, 353 to 374, 375 to 417, 418 to 438, 439 to 460, 461 to 481, 482 to 502, 503 to 525, 526 to 546, 547 to 567, 568 to 588, 589 to 609, 610 to 629, 630 to 650, 651 to 671, 672 to 691, 692 to 711, 712 to 734, 735 to 758, 808 to 828, 829 to 850, 851 to 871, 872 to 894, 895 to 930, 931 to 959, 960 to 984, 985 to 1019, and 1162 to 1186. The tract at residues 330–1186 is 28 X approximate tandem repeats; sequence GKQVRSFTYD…LNEENPHQLQ (857 aa).

It belongs to the RHS family.

Functionally, rhs elements have a nonessential function. They may play an important role in the natural ecology of the cell. The protein is Protein RhsB (rhsB) of Escherichia coli (strain K12).